The following is a 409-amino-acid chain: Failed axon connections homolog (409 aa).

A helical membrane pass occupies residues 68–88 (YLTGGALLAAAAYLLHELLVI). Residues 372-409 (DEGAENSFSRTPDTDFTGHSLFDSDVDMDDYTDHEQCK) are disordered.

This sequence belongs to the FAX family.

It is found in the membrane. Functionally, may play a role in axonal development. This Homo sapiens (Human) protein is Failed axon connections homolog (FAXC).